Here is a 127-residue protein sequence, read N- to C-terminus: Large ribosomal subunit protein bL17 (127 aa).

Belongs to the bacterial ribosomal protein bL17 family. Part of the 50S ribosomal subunit. Contacts protein L32.

This is Large ribosomal subunit protein bL17 from Xanthomonas axonopodis pv. citri (strain 306).